We begin with the raw amino-acid sequence, 791 residues long: MVEYVVSLDKLGVHDVEHVGGKNASLGEMISNLAGAGVSVPGGFATTAQAYRDFLEQSGLNDRIHAALDALDVDDVNALAKTGAQIRQWVMEAEFPARLDSEIRQAFAALANGNDNLAVAVRSSATAEDLPDASFAGQQETFLNIRGVDNVIRAAKEVFASLFNDRAIAYRVHQGFDHKLVALSAGVQRMVRSETGTAGVMFTLDTESGFRDVVFITGAYGLGETVVQGAVNPDEFYVHKPTLEAGRPAILRRNLGSKAIKMIYGDEAKAGRSVKVVDVDRADRARFALSDAEVTELAKQAMIIEKHYGRPMDIEWAKDGDDGKLYIVQARPETVKSRASATVMERYLLKEKGTVLVEGRAIGQRIGAGPVKVINDVSEMDKVQPGDVLVSDMTDPDWEPVMKRASAIVTNRGGRTCHAAIIARELGIPAVVGCGNATQILQDGQGVTVSCAEGDTGFIFEGELGFDVRKNSVDAMPDLPFKIMMNVGNPDRAFDFAQLPNEGVGLARLEFIINRMIGVHPKALLNFAGLPADIKESVEKRIAGYPDPVGFYVEKLVEGISTLAAAFWPKKVIVRLSDFKSNEYANLIGGKLYEPEEENPMLGFRGASRYISESFRDCFELECRALKKVRNEMGLTNVEIMVPFVRTLGEASQVVELLAGNGLKRGENGLKVIMMCELPSNALLADEFLEFFDGFSIGSNDLTQLTLGLDRDSGIVAHLFDERNPAVKKLLANAIAACNKAGKYIGICGQGPSDHPDLARWLMEQGIESVSLNPDSVLDTWFFLAEGQDQA.

Thr-416 carries the phosphothreonine modification. The active-site Tele-phosphohistidine intermediate is the His-418. Substrate contacts are provided by Arg-508, Arg-575, Glu-677, Gly-698, Ser-699, Asn-700, and Asp-701. Glu-677 contributes to the Mg(2+) binding site. Asp-701 serves as a coordination point for Mg(2+). Tyr-744 bears the Phosphotyrosine mark. Residue Cys-748 is the Proton donor of the active site.

This sequence belongs to the PEP-utilizing enzyme family. Mg(2+) serves as cofactor.

It carries out the reaction pyruvate + ATP + H2O = phosphoenolpyruvate + AMP + phosphate + 2 H(+). The protein operates within carbohydrate biosynthesis; gluconeogenesis. Functionally, catalyzes the phosphorylation of pyruvate to phosphoenolpyruvate. This is Phosphoenolpyruvate synthase (ppsA) from Pseudomonas aeruginosa (strain UCBPP-PA14).